The sequence spans 417 residues: Methyltransferase/ribosomally synthesized cyclic peptide omphalotin A precursor ophMA (417 aa).

A methyltransferase domain region spans residues 1–251; sequence METSTQTKAG…GVSTFYIPPK (251 aa). Residues arginine 72, tyrosine 76, and tyrosine 98 contribute to the active site. S-adenosyl-L-methionine is bound by residues tyrosine 98, histidine 100, valine 103, alanine 130, glutamine 172, alanine 213, serine 244, and threonine 245. The interval 252–378 is clasp domain; that stretch reads ARKASNLDII…WAIRCAMKNM (127 aa). Residues 379–399 are precursor leader; the sequence is PSSLLDAARESGEEASQNGFP. Residues valine 401, valine 403, and valine 404 each carry the N-methylvaline modification. An N-methylglycine modification is found at glycine 405. Valine 406 carries the N-methylvaline modification. Position 407 is an N-methylisoleucine (isoleucine 407). Glycine 408 bears the N-methylglycine mark. The residue at position 410 (isoleucine 410) is an N-methylisoleucine. N-methylglycine is present on glycine 411. Valine 413 is subject to N-methylvaline.

It in the N-terminal section; belongs to the precorrin methyltransferase family. As to quaternary structure, homodimer. In terms of processing, ophMA automethylates at Val-401, Val-403, Val-404, Gly-405, Val-406, Ile-407, Gly-408, Ile-410, Gly-411 and Val-413 before being processed by the prolyloligopeptidase ophP which likely forms a peptidyl ester upon removal of the follower propeptide, which then undergoes macrocyclization with the N-terminus of the modified core peptide. Peptide backbone alpha-N-methylations change the physicochemical properties of amide bonds to provide structural constraints and other favorable characteristics including biological membrane permeability to peptides.

Its pathway is mycotoxin biosynthesis. Fusion protein of the methyltransferase ophM and the omphalotin core peptide; part of the gene cluster that mediates the biosynthesis of omphalotin A, a highly methylated cyclic dodecapeptide with nematodicidal activity. Omphalotin A derives from the C-terminus of the ophMA protein, and it is the ophMA protein that methylates its own C-terminus using S-adenosyl methionine (SAM). The C-terminus is subsequently cleaved off and macrocyclized by the prolyloligopeptidase ophP to give the final product. In Omphalotus olearius (Jack o'lantern), this protein is Methyltransferase/ribosomally synthesized cyclic peptide omphalotin A precursor ophMA.